The following is a 516-amino-acid chain: Cytochrome P450 1A2 (516 aa).

An O-linked (GlcNAc) serine glycan is attached at S69. Residue F226 coordinates substrate. C458 contributes to the heme binding site.

This sequence belongs to the cytochrome P450 family. As to quaternary structure, interacts with PGRMC1; the interaction requires PGRMC1 homodimerization. Heme is required as a cofactor.

The protein localises to the endoplasmic reticulum membrane. It localises to the microsome membrane. It carries out the reaction an organic molecule + reduced [NADPH--hemoprotein reductase] + O2 = an alcohol + oxidized [NADPH--hemoprotein reductase] + H2O + H(+). The catalysed reaction is 17beta-estradiol + reduced [NADPH--hemoprotein reductase] + O2 = 2-hydroxy-17beta-estradiol + oxidized [NADPH--hemoprotein reductase] + H2O + H(+). It catalyses the reaction 17beta-estradiol + reduced [NADPH--hemoprotein reductase] + O2 = 4-hydroxy-17beta-estradiol + oxidized [NADPH--hemoprotein reductase] + H2O + H(+). The enzyme catalyses estrone + reduced [NADPH--hemoprotein reductase] + O2 = 2-hydroxyestrone + oxidized [NADPH--hemoprotein reductase] + H2O + H(+). It carries out the reaction estrone + reduced [NADPH--hemoprotein reductase] + O2 = 4-hydroxyestrone + oxidized [NADPH--hemoprotein reductase] + H2O + H(+). The catalysed reaction is cholesterol + reduced [NADPH--hemoprotein reductase] + O2 = 25-hydroxycholesterol + oxidized [NADPH--hemoprotein reductase] + H2O + H(+). It catalyses the reaction all-trans-retinol + reduced [NADPH--hemoprotein reductase] + O2 = all-trans-retinal + oxidized [NADPH--hemoprotein reductase] + 2 H2O + H(+). The enzyme catalyses all-trans-retinal + reduced [NADPH--hemoprotein reductase] + O2 = all-trans-retinoate + oxidized [NADPH--hemoprotein reductase] + H2O + 2 H(+). It carries out the reaction (5Z,8Z,11Z,14Z)-eicosatetraenoate + reduced [NADPH--hemoprotein reductase] + O2 = (14R,15S)-epoxy-(5Z,8Z,11Z)-eicosatrienoate + oxidized [NADPH--hemoprotein reductase] + H2O + H(+). The catalysed reaction is (5Z,8Z,11Z,14Z)-eicosatetraenoate + reduced [NADPH--hemoprotein reductase] + O2 = (14S,15R)-epoxy-(5Z,8Z,11Z)-eicosatrienoate + oxidized [NADPH--hemoprotein reductase] + H2O + H(+). It catalyses the reaction (5Z,8Z,11Z,14Z,17Z)-eicosapentaenoate + reduced [NADPH--hemoprotein reductase] + O2 = (17R,18S)-epoxy-(5Z,8Z,11Z,14Z)-eicosatetraenoate + oxidized [NADPH--hemoprotein reductase] + H2O + H(+). The enzyme catalyses (4Z,7Z,10Z,13Z,16Z,19Z)-docosahexaenoate + reduced [NADPH--hemoprotein reductase] + O2 = (19R,20S)-epoxy-(4Z,7Z,10Z,13Z,16Z)-docosapentaenoate + oxidized [NADPH--hemoprotein reductase] + H2O + H(+). It carries out the reaction (5S)-hydroperoxy-(6E,8Z,11Z,14Z)-eicosatetraenoate = 5-oxo-(6E,8Z,11Z,14Z)-eicosatetraenoate + H2O. The catalysed reaction is (12S)-hydroperoxy-(5Z,8Z,10E,14Z)-eicosatetraenoate = 12-oxo-(5Z,8Z,10E,14Z)-eicosatetraenoate + H2O. It catalyses the reaction (15S)-hydroperoxy-(5Z,8Z,11Z,13E)-eicosatetraenoate = 15-oxo-(5Z,8Z,11Z,13E)-eicosatetraenoate + H2O. The enzyme catalyses (13S)-hydroperoxy-(9Z,11E)-octadecadienoate = 13-oxo-(9Z,11E)-octadecadienoate + H2O. It carries out the reaction (5Z,8Z,11Z,14Z)-eicosatetraenoate + reduced [NADPH--hemoprotein reductase] + O2 = 13-hydroxy-(5Z,8Z,11Z,14Z)-eicosatetraenoate + oxidized [NADPH--hemoprotein reductase] + H2O + H(+). The catalysed reaction is (5Z,8Z,11Z,14Z)-eicosatetraenoate + reduced [NADPH--hemoprotein reductase] + O2 = 19-hydroxy-(5Z,8Z,11Z,14Z)-eicosatetraenoate + oxidized [NADPH--hemoprotein reductase] + H2O + H(+). It catalyses the reaction (9Z,12Z)-octadecadienoate + reduced [NADPH--hemoprotein reductase] + O2 = 11-hydroxy-(9Z,12Z)-octadecadienoate + oxidized [NADPH--hemoprotein reductase] + H2O + H(+). It functions in the pathway cofactor metabolism; retinol metabolism. Its pathway is steroid metabolism; cholesterol metabolism. It participates in lipid metabolism; arachidonate metabolism. Its function is as follows. A cytochrome P450 monooxygenase involved in the metabolism of various endogenous substrates, including fatty acids, steroid hormones and vitamins. Mechanistically, uses molecular oxygen inserting one oxygen atom into a substrate, and reducing the second into a water molecule, with two electrons provided by NADPH via cytochrome P450 reductase (NADPH--hemoprotein reductase). Catalyzes the hydroxylation of carbon-hydrogen bonds. Exhibits high catalytic activity for the formation of hydroxyestrogens from estrone (E1) and 17beta-estradiol (E2), namely 2-hydroxy E1 and E2. Metabolizes cholesterol toward 25-hydroxycholesterol, a physiological regulator of cellular cholesterol homeostasis. May act as a major enzyme for all-trans retinoic acid biosynthesis in the liver. Catalyzes two successive oxidative transformation of all-trans retinol to all-trans retinal and then to the active form all-trans retinoic acid. Primarily catalyzes stereoselective epoxidation of the last double bond of polyunsaturated fatty acids (PUFA), displaying a strong preference for the (R,S) stereoisomer. Catalyzes bisallylic hydroxylation and omega-1 hydroxylation of PUFA. May also participate in eicosanoids metabolism by converting hydroperoxide species into oxo metabolites (lipoxygenase-like reaction, NADPH-independent). Plays a role in the oxidative metabolism of xenobiotics. Catalyzes the N-hydroxylation of heterocyclic amines and the O-deethylation of phenacetin. Metabolizes caffeine via N3-demethylation. This is Cytochrome P450 1A2 (CYP1A2) from Pongo abelii (Sumatran orangutan).